Consider the following 308-residue polypeptide: 11-beta-hydroxysteroid dehydrogenase-like 2 (308 aa).

The helical; Signal-anchor for type II membrane protein transmembrane segment at 10–30 (FLLPPLTISFLVLFYPFYLFT) threads the bilayer. NADP(+) contacts are provided by residues 53 to 79 (GASS…VARR) and aspartate 104. Residue serine 183 coordinates substrate. Tyrosine 196 functions as the Proton acceptor in the catalytic mechanism. Residues 196–200 (YSASK) and lysine 200 each bind NADP(+).

Belongs to the short-chain dehydrogenases/reductases (SDR) family.

It localises to the membrane. The sequence is that of 11-beta-hydroxysteroid dehydrogenase-like 2 (HSD2) from Arabidopsis thaliana (Mouse-ear cress).